The chain runs to 418 residues: Actin-related protein 3 (418 aa).

An N-acetylalanine modification is found at Ala-2. N6-acetyllysine is present on residues Lys-240, Lys-244, Lys-251, and Lys-254.

Belongs to the actin family. ARP3 subfamily. As to quaternary structure, component of the Arp2/3 complex composed of ACTR2/ARP2, ACTR3/ARP3, ARPC1B/p41-ARC, ARPC2/p34-ARC, ARPC3/p21-ARC, ARPC4/p20-ARC and ARPC5/p16-ARC. Interacts with WHDC1. Interacts weakly with MEFV. Interacts with AVIL.

It is found in the cytoplasm. The protein localises to the cytoskeleton. The protein resides in the cell projection. It localises to the nucleus. Its function is as follows. ATP-binding component of the Arp2/3 complex, a multiprotein complex that mediates actin polymerization upon stimulation by nucleation-promoting factor (NPF). The Arp2/3 complex mediates the formation of branched actin networks in the cytoplasm, providing the force for cell motility. Seems to contact the pointed end of the daughter actin filament. In podocytes, required for the formation of lamellipodia downstream of AVIL and PLCE1 regulation. In addition to its role in the cytoplasmic cytoskeleton, the Arp2/3 complex also promotes actin polymerization in the nucleus, thereby regulating gene transcription and repair of damaged DNA. The Arp2/3 complex promotes homologous recombination (HR) repair in response to DNA damage by promoting nuclear actin polymerization, leading to drive motility of double-strand breaks (DSBs). Plays a role in ciliogenesis. The sequence is that of Actin-related protein 3 (ACTR3) from Bos taurus (Bovine).